A 552-amino-acid polypeptide reads, in one-letter code: CTP synthase (552 aa).

The segment at 1-270 is amidoligase domain; sequence MTKFVFVTGG…DGLICDKLRL (270 aa). Ser-13 provides a ligand contact to CTP. UTP is bound at residue Ser-13. Residues 14–19 and Asp-71 each bind ATP; that span reads SLGKGI. Asp-71 and Glu-144 together coordinate Mg(2+). CTP contacts are provided by residues 151-153, 191-196, and Lys-227; these read DIE and KTKPTQ. UTP contacts are provided by residues 191-196 and Lys-227; that span reads KTKPTQ. The Glutamine amidotransferase type-1 domain occupies 295–548; that stretch reads KIAMVGKYVE…VKAAIERQKA (254 aa). Residue Gly-357 coordinates L-glutamine. Cys-384 serves as the catalytic Nucleophile; for glutamine hydrolysis. Residues 385–388, Glu-408, and Arg-474 each bind L-glutamine; that span reads LGMQ. Residues His-521 and Glu-523 contribute to the active site.

It belongs to the CTP synthase family. Homotetramer.

It carries out the reaction UTP + L-glutamine + ATP + H2O = CTP + L-glutamate + ADP + phosphate + 2 H(+). The enzyme catalyses L-glutamine + H2O = L-glutamate + NH4(+). It catalyses the reaction UTP + NH4(+) + ATP = CTP + ADP + phosphate + 2 H(+). It functions in the pathway pyrimidine metabolism; CTP biosynthesis via de novo pathway; CTP from UDP: step 2/2. With respect to regulation, allosterically activated by GTP, when glutamine is the substrate; GTP has no effect on the reaction when ammonia is the substrate. The allosteric effector GTP functions by stabilizing the protein conformation that binds the tetrahedral intermediate(s) formed during glutamine hydrolysis. Inhibited by the product CTP, via allosteric rather than competitive inhibition. Its function is as follows. Catalyzes the ATP-dependent amination of UTP to CTP with either L-glutamine or ammonia as the source of nitrogen. Regulates intracellular CTP levels through interactions with the four ribonucleotide triphosphates. The protein is CTP synthase of Delftia acidovorans (strain DSM 14801 / SPH-1).